We begin with the raw amino-acid sequence, 172 residues long: MGKKIAVVLTYYFEDSEYTEPAKAFKEAGHELTVIEKEKGKTVKGKQGTAEVTVDASIDDVNSSDFDALLIPGGFSPDQLRADDRFVQFTKAFMTDKKPVFAICHGPQLLINAKALDGRKATGYTSIRVDMENAGADVVDKEVVVCQDQLVTSRTPDDIPAFNRESLALLEK.

The PfpI endopeptidase domain maps to 3–171 (KKIAVVLTYY…FNRESLALLE (169 aa)). C104 functions as the Nucleophile in the catalytic mechanism. The active site involves H105.

It belongs to the peptidase C56 family.

Its function is as follows. Functions in the protection against aldehyde-stress, possibly by degrading damaged proteins. The sequence is that of General stress protein 18 (yfkM) from Bacillus subtilis (strain 168).